A 284-amino-acid chain; its full sequence is Acetylglutamate kinase (284 aa).

Substrate-binding positions include 64-65 (GG), R86, and N179.

Belongs to the acetylglutamate kinase family. ArgB subfamily.

The protein localises to the cytoplasm. It carries out the reaction N-acetyl-L-glutamate + ATP = N-acetyl-L-glutamyl 5-phosphate + ADP. Its pathway is amino-acid biosynthesis; L-arginine biosynthesis; N(2)-acetyl-L-ornithine from L-glutamate: step 2/4. Functionally, catalyzes the ATP-dependent phosphorylation of N-acetyl-L-glutamate. In Prochlorococcus marinus subsp. pastoris (strain CCMP1986 / NIES-2087 / MED4), this protein is Acetylglutamate kinase.